Here is a 1161-residue protein sequence, read N- to C-terminus: Translation initiation factor IF-2 (1161 aa).

Residues 67–561 (KSSFKAANEQ…RRAMELRAAK (495 aa)) are disordered. Over residues 83–105 (QNKDSNSRSKPLNKEKPSKESLN) the composition is skewed to basic and acidic residues. A compositionally biased stretch (polar residues) spans 139-154 (SRISNLQSQVLPNSHN). Basic and acidic residues-rich tracts occupy residues 164–180 (NPNE…EKKS) and 211–220 (KDIKANKKND). Composition is skewed to low complexity over residues 224 to 250 (NQRP…PRIK) and 268 to 282 (NSNR…PPSN). Composition is skewed to polar residues over residues 295 to 311 (RQVT…QGVS), 352 to 362 (RQGAPNRQGSP), and 380 to 393 (LNRS…QNPS). Residues 412–432 (ASDKEKLNRSNFEKQKVEPPK) show a composition bias toward basic and acidic residues. Polar residues predominate over residues 440 to 461 (SRLNASPTAKKTPHRSFTNNSK). Composition is skewed to basic and acidic residues over residues 464–478 (GRSD…EALR) and 543–561 (KETT…RAAK). A tr-type G domain is found at 653 to 830 (KRPPVITVMG…EVEDLQANPE (178 aa)). The G1 stretch occupies residues 662 to 669 (GHVDHGKT). A GTP-binding site is contributed by 662-669 (GHVDHGKT). The G2 stretch occupies residues 687–691 (GITQH). The segment at 712–715 (DTPG) is G3. Residues 712–716 (DTPGH) and 766–769 (NKID) each bind GTP. Residues 766–769 (NKID) form a G4 region. The tract at residues 802–804 (SAI) is G5.

Belongs to the TRAFAC class translation factor GTPase superfamily. Classic translation factor GTPase family. IF-2 subfamily.

It localises to the cytoplasm. One of the essential components for the initiation of protein synthesis. Protects formylmethionyl-tRNA from spontaneous hydrolysis and promotes its binding to the 30S ribosomal subunits. Also involved in the hydrolysis of GTP during the formation of the 70S ribosomal complex. The polypeptide is Translation initiation factor IF-2 (Prochlorococcus marinus (strain MIT 9515)).